Consider the following 245-residue polypeptide: Uridylate kinase (245 aa).

20-23 (KVSG) contacts ATP. Glycine 62 contacts UMP. Residues glycine 63 and arginine 67 each coordinate ATP. UMP-binding positions include aspartate 81 and 142-149 (IGSPFFTT). The ATP site is built by threonine 169, glutamine 170, tyrosine 175, and aspartate 178.

The protein belongs to the UMP kinase family. Homohexamer.

Its subcellular location is the cytoplasm. It carries out the reaction UMP + ATP = UDP + ADP. Its pathway is pyrimidine metabolism; CTP biosynthesis via de novo pathway; UDP from UMP (UMPK route): step 1/1. With respect to regulation, inhibited by UTP. Functionally, catalyzes the reversible phosphorylation of UMP to UDP. The protein is Uridylate kinase of Anaplasma marginale (strain St. Maries).